A 290-amino-acid polypeptide reads, in one-letter code: Lipoyl synthase (290 aa).

The [4Fe-4S] cluster site is built by cysteine 34, cysteine 39, cysteine 45, cysteine 60, cysteine 64, cysteine 67, and serine 273. In terms of domain architecture, Radical SAM core spans 46-262 (WNKRHATVMI…KYIAYSKGFL (217 aa)).

The protein belongs to the radical SAM superfamily. Lipoyl synthase family. The cofactor is [4Fe-4S] cluster.

The protein localises to the cytoplasm. The catalysed reaction is [[Fe-S] cluster scaffold protein carrying a second [4Fe-4S](2+) cluster] + N(6)-octanoyl-L-lysyl-[protein] + 2 oxidized [2Fe-2S]-[ferredoxin] + 2 S-adenosyl-L-methionine + 4 H(+) = [[Fe-S] cluster scaffold protein] + N(6)-[(R)-dihydrolipoyl]-L-lysyl-[protein] + 4 Fe(3+) + 2 hydrogen sulfide + 2 5'-deoxyadenosine + 2 L-methionine + 2 reduced [2Fe-2S]-[ferredoxin]. Its pathway is protein modification; protein lipoylation via endogenous pathway; protein N(6)-(lipoyl)lysine from octanoyl-[acyl-carrier-protein]: step 2/2. Its function is as follows. Catalyzes the radical-mediated insertion of two sulfur atoms into the C-6 and C-8 positions of the octanoyl moiety bound to the lipoyl domains of lipoate-dependent enzymes, thereby converting the octanoylated domains into lipoylated derivatives. This is Lipoyl synthase from Wolbachia pipientis subsp. Culex pipiens (strain wPip).